Here is a 364-residue protein sequence, read N- to C-terminus: Geranylfarnesyl diphosphate synthase, chloroplastic (364 aa).

Residues 1–51 (MSHCTIFLYKYFPGKPRYQHCSFLHPLNHKLKSLFLPITGSRFLSNSTFSV) constitute a chloroplast transit peptide. Positions 72, 111, and 143 each coordinate isopentenyl diphosphate. Residues D150 and D156 each coordinate Mg(2+). R161 is a dimethylallyl diphosphate binding site. Residue R162 participates in isopentenyl diphosphate binding. Residues K249, T250, Q287, D294, K304, and K314 each contribute to the dimethylallyl diphosphate site.

Belongs to the FPP/GGPP synthase family. As to quaternary structure, monomer. The cofactor is Mg(2+). Strongly expressed in glandular trichomes, and, at low levels, in leaves, stems and flowers.

Its subcellular location is the plastid. The protein localises to the chloroplast. The catalysed reaction is isopentenyl diphosphate + (2E,6E,10E)-geranylgeranyl diphosphate = (2E,6E,10E,14E)-geranylfarnesyl diphosphate + diphosphate. The enzyme catalyses 2 isopentenyl diphosphate + (2E,6E)-farnesyl diphosphate = (2E,6E,10E,14E)-geranylfarnesyl diphosphate + 2 diphosphate. It carries out the reaction 3 isopentenyl diphosphate + (2E)-geranyl diphosphate = (2E,6E,10E,14E)-geranylfarnesyl diphosphate + 3 diphosphate. It catalyses the reaction 4 isopentenyl diphosphate + dimethylallyl diphosphate = (2E,6E,10E,14E)-geranylfarnesyl diphosphate + 4 diphosphate. The protein operates within secondary metabolite biosynthesis; terpenoid biosynthesis. It functions in the pathway isoprenoid biosynthesis. Its function is as follows. Involved in the biosynthesis of leucosceptrane sesterterpenoids natural products, which are playing defensive roles toward herbivorus insects (e.g. Spodoptera exigua). Catalyzes the condensation of isopentenyl pyrophosphate (IDP) with the allylic pyrophosphates to yield geranylfarnesyl diphosphate (GFDP), the C(25) prenyl diphosphate precursor to all sesterterpenoids. Geranylgeranyl diphosphate (GGPP) is the preferred substrate, however dimethylallyl diphosphate (DMADP), farnesyl diphosphate (FDP) and geranyl diphosphate (GDP) can also be used as allylic substrate. In Leucosceptrum canum (Hairy white-wand), this protein is Geranylfarnesyl diphosphate synthase, chloroplastic.